Here is a 417-residue protein sequence, read N- to C-terminus: FAD-dependent monooxygenase aptC (417 aa).

Positions Met1–Ala18 are cleaved as a signal peptide. FAD contacts are provided by Glu32, Ala43, Arg117, Asp332, and Gly345.

This sequence belongs to the paxM FAD-dependent monooxygenase family. FAD serves as cofactor.

It catalyses the reaction 3,6,8,9-tetrahydroxy-1-oxo-3-(2-oxopropyl)-1,2,3,4-tetrahydroanthracene-2-carboxyl-[ACP] + NADPH + O2 + H(+) = 2,3,6,8,9-pentahydroxy-1-oxo-3-(2-oxopropyl)-1,2,3,4-tetrahydroanthracene-2-carboxyl-[ACP] + NADP(+) + H2O. The protein operates within secondary metabolite biosynthesis. FAD-dependent monooxygenase; part of the gene cluster that mediates the biosynthesis of asperthecin, an anthraquinone pigment. Polyketide synthase (PKS) aptA catalyzes the formation of the aromatic polyketide from acetyl coenzyme A and seven malonyl coenzyme A molecules. Polyketide is subsequently hydrolyzed by the action of the hydrolase aptB into endocrocin-9-anthrone. Endocrocin-9-anthrone is then oxidized into endocrocin by the monooxygenase aptC. Endocrocin is likely to decarboxylate spontaneously to form emodin which explains why there is no decarboxylase in the asperthecin biosynthesis cluster. Finally, aptC or another endogenous oxygenase catalyzes additional oxidation steps to form asperthecin. The polypeptide is FAD-dependent monooxygenase aptC (Emericella nidulans (strain FGSC A4 / ATCC 38163 / CBS 112.46 / NRRL 194 / M139) (Aspergillus nidulans)).